The chain runs to 722 residues: Lysophospholipid acyltransferase 6 (722 aa).

5 helical membrane passes run 25–45, 62–84, 104–123, 180–200, and 243–263; these read MVGL…ALFL, LRHT…QQAI, IVQR…VHLM, ALEY…PLVF, and KVVG…IYPV. Residues N349 and H381 contribute to the active site. 3 helical membrane passes run 378–398, 424–444, and 452–472; these read AVWH…AVVV, ILTC…FVLL, and LYLR…FILP. 2 stretches are compositionally biased toward polar residues: residues 485–511 and 549–570; these read NGNG…STAA and VEQP…QQQP. 2 disordered regions span residues 485-582 and 650-687; these read NGNG…PTCA and NGAI…DLHP.

Belongs to the membrane-bound acyltransferase family.

It is found in the endoplasmic reticulum. Its subcellular location is the membrane. It carries out the reaction a 1-acyl-sn-glycero-3-phospho-L-serine + an acyl-CoA = a 1,2-diacyl-sn-glycero-3-phospho-L-serine + CoA. The enzyme catalyses 1-(9Z-octadecenoyl)-sn-glycero-3-phospho-L-serine + (9Z)-hexadecenoyl-CoA = 1-(9Z-octadecenoyl)-2-(9Z-hexadecenoyl)-sn-glycero-3-phospho-L-serine + CoA. The catalysed reaction is 1-(9Z-octadecenoyl)-sn-glycero-3-phospho-L-serine + (9Z)-octadecenoyl-CoA = 1,2-di-(9Z)-octadecenoyl-sn-glycero-3-phospho-L-serine + CoA. It catalyses the reaction a 1-acyl-sn-glycero-3-phosphocholine + an acyl-CoA = a 1,2-diacyl-sn-glycero-3-phosphocholine + CoA. It carries out the reaction 1-hexadecanoyl-sn-glycero-3-phosphocholine + (9Z)-octadecenoyl-CoA = 1-hexadecanoyl-2-(9Z-octadecenoyl)-sn-glycero-3-phosphocholine + CoA. The enzyme catalyses (9Z)-hexadecenoyl-CoA + 1-hexadecanoyl-sn-glycero-3-phosphocholine = 1-hexadecanoyl-2-(9Z-hexadecenoyl)-sn-glycero-3-phosphocholine + CoA. The catalysed reaction is a 1-acyl-sn-glycero-3-phosphoethanolamine + an acyl-CoA = a 1,2-diacyl-sn-glycero-3-phosphoethanolamine + CoA. It catalyses the reaction 1-hexadecanoyl-sn-glycero-3-phosphoethanolamine + (9Z)-octadecenoyl-CoA = 1-hexadecanoyl-2-(9Z-octadecenoyl)-sn-glycero-3-phosphoethanolamine + CoA. It carries out the reaction 1-hexadecanoyl-sn-glycero-3-phosphoethanolamine + (9Z,12Z)-octadecadienoyl-CoA = 1-hexadecanoyl-2-(9Z,12Z-octadecadienoyl)-sn-glycero-3-phosphoethanolamine + CoA. The enzyme catalyses 1-hexadecanoyl-sn-glycero-3-phosphoethanolamine + (9Z)-hexadecenoyl-CoA = 1-hexadecanoyl-2-(9Z)-hexadecenoyl-sn-glycero-3-phosphoethanolamine + CoA. The catalysed reaction is 1-(9Z-octadecenoyl)-sn-glycero-3-phospho-(1'-sn-glycerol) + (9Z)-octadecenoyl-CoA = 1,2-di-(9Z-octadecenoyl)-sn-glycero-3-phospho-(1'-sn-glycerol) + CoA. Its pathway is lipid metabolism; phospholipid metabolism. Acyltransferase with broad-specificity, that mediates the acylation of lysophospholipids to produce phospholipids (glycerophospholipids). Converts lysophosphatidylserine (1-acyl-2-hydroxy-sn-glycero-3-phospho-L-serine or LPS) to phosphatidylserine (1,2-diacyl-sn-glycero-3-phospho-L-serine or PS) (LPSAT activity), lysophosphatidylcholine (1-acyl-sn-glycero-3-phosphocholine or LPC) to phosphatidylcholine (1,2-diacyl-sn-glycero-3-phosphocholine or PC) (LPCAT activity), also lysophosphatidylethanolamine (1-acyl-sn-glycero-3-phosphochethanolamine or LPE) to phosphatidylchethanolamine (LPEAT activity) and lysophosphatidylglycerol (1-acyl-2-hydroxy-sn-glycero-3-phospho-(1'-sn-glycerol) or LPG) to phosphatidylglycerol (1,2-diacyl-sn-glycero-3-phospho-(1'-sn-glycerol) or PG) (LPGAT activity). Has a preference for unsaturated fatty acids of at least 16 carbons such as oleoyl-CoA ((9Z)-octadecenoyl-CoA) and palmitoleoyl-CoA ((9Z)-hexadecenoyl-CoA). Glycerophospholipids are important structural and functional components of cellular membrane, acyl-chain remodeling regulates the molecular species distribution of glycerophospholipids which can affect membrane fluidity and curvature. Essential for fertility and viability together with Nessy protein (Nes). This chain is Lysophospholipid acyltransferase 6, found in Drosophila melanogaster (Fruit fly).